A 458-amino-acid polypeptide reads, in one-letter code: Exodeoxyribonuclease 7 large subunit (458 aa).

It belongs to the XseA family. As to quaternary structure, heterooligomer composed of large and small subunits.

The protein resides in the cytoplasm. The enzyme catalyses Exonucleolytic cleavage in either 5'- to 3'- or 3'- to 5'-direction to yield nucleoside 5'-phosphates.. In terms of biological role, bidirectionally degrades single-stranded DNA into large acid-insoluble oligonucleotides, which are then degraded further into small acid-soluble oligonucleotides. The chain is Exodeoxyribonuclease 7 large subunit from Halalkalibacterium halodurans (strain ATCC BAA-125 / DSM 18197 / FERM 7344 / JCM 9153 / C-125) (Bacillus halodurans).